The chain runs to 405 residues: Acetyl-CoA decarbonylase/synthase complex subunit delta (405 aa).

Belongs to the CdhD family. Heterodimer of delta and gamma chains. The ACDS complex is made up of alpha, epsilon, beta, gamma and delta chains with a probable stoichiometry of (alpha(2)epsilon(2))(4)-beta(8)-(gamma(1)delta(1))(8).

Its function is as follows. Part of a complex that catalyzes the reversible cleavage of acetyl-CoA, allowing autotrophic growth from CO(2). Probably maintains the overall quaternary structure of the ACDS complex. This Methanocaldococcus jannaschii (strain ATCC 43067 / DSM 2661 / JAL-1 / JCM 10045 / NBRC 100440) (Methanococcus jannaschii) protein is Acetyl-CoA decarbonylase/synthase complex subunit delta.